Here is a 267-residue protein sequence, read N- to C-terminus: Large ribosomal subunit protein uL4 (267 aa).

The protein belongs to the universal ribosomal protein uL4 family. As to quaternary structure, part of the 50S ribosomal subunit.

One of the primary rRNA binding proteins, this protein initially binds near the 5'-end of the 23S rRNA. It is important during the early stages of 50S assembly. It makes multiple contacts with different domains of the 23S rRNA in the assembled 50S subunit and ribosome. In terms of biological role, forms part of the polypeptide exit tunnel. The polypeptide is Large ribosomal subunit protein uL4 (Saccharolobus islandicus (strain Y.N.15.51 / Yellowstone #2) (Sulfolobus islandicus)).